Here is a 635-residue protein sequence, read N- to C-terminus: Probable extracellular metalloproteinase 1 (635 aa).

Residues 1–19 (MHGLLLAAGLLSLPLHVLA) form the signal peptide. Residues 20–246 (HPQPSTSTSL…VHNVVDYVAH (227 aa)) constitute a propeptide that is removed on maturation. N-linked (GlcNAc...) asparagine glycosylation occurs at N287. H430 lines the Zn(2+) pocket. E431 is an active-site residue. Zn(2+) is bound at residue H434. Residues N475, N594, and N623 are each glycosylated (N-linked (GlcNAc...) asparagine).

The protein belongs to the peptidase M36 family. The cofactor is Zn(2+).

It localises to the secreted. Functionally, secreted metalloproteinase probably acting as a virulence factor. This is Probable extracellular metalloproteinase 1 (MEP1) from Arthroderma benhamiae (strain ATCC MYA-4681 / CBS 112371) (Trichophyton mentagrophytes).